The primary structure comprises 31 residues: uncharacterized protein (31 aa).

The segment at 1–31 (MKKLERMSEVSQMCSEAKKNRKRMSVVSSVA) is disordered.

This is an uncharacterized protein from Sulfolobus islandicus filamentous virus (isolate Iceland/Hveragerdi) (SIFV).